Reading from the N-terminus, the 60-residue chain is Ferredoxin (60 aa).

4Fe-4S ferredoxin-type domains lie at 2–29 (KVRV…LGDD) and 30–60 (GKAK…SVEE). The [4Fe-4S] cluster site is built by C10, C13, and C16. A disulfide bond links C20 and C43. [4Fe-4S] cluster is bound at residue C51.

In terms of assembly, monomer. The cofactor is [4Fe-4S] cluster.

Functionally, ferredoxins are iron-sulfur proteins that transfer electrons in a wide variety of metabolic reactions. The polypeptide is Ferredoxin (fdx) (Thermotoga maritima (strain ATCC 43589 / DSM 3109 / JCM 10099 / NBRC 100826 / MSB8)).